We begin with the raw amino-acid sequence, 561 residues long: DNA ligase B (561 aa).

Residue Lys-125 is the N6-AMP-lysine intermediate of the active site.

It belongs to the NAD-dependent DNA ligase family. LigB subfamily.

The enzyme catalyses NAD(+) + (deoxyribonucleotide)n-3'-hydroxyl + 5'-phospho-(deoxyribonucleotide)m = (deoxyribonucleotide)n+m + AMP + beta-nicotinamide D-nucleotide.. Its function is as follows. Catalyzes the formation of phosphodiester linkages between 5'-phosphoryl and 3'-hydroxyl groups in double-stranded DNA using NAD as a coenzyme and as the energy source for the reaction. This chain is DNA ligase B, found in Salmonella paratyphi A (strain AKU_12601).